Here is a 185-residue protein sequence, read N- to C-terminus: MTDLLLSSLVIAVGLAMDSFSVSLAGGAALKDNIVKTAVTAGIFFGFFQFAMPLLGWGIGVPITQVIDPFGYWIVVGLFFFIGGKMIWDSFSGDEEGISLIGWKVLLLLAVATSIDALAVGISFALIGEAVLLPAVIIGVVAFLFSFFGVLAGHKLSSILGNKMQILGGVILVLIGIKFLIEYCL.

Helical transmembrane passes span 4 to 24 (LLLSSLVIAVGLAMDSFSVSL), 43 to 63 (IFFGFFQFAMPLLGWGIGVPI), 67 to 87 (IDPFGYWIVVGLFFFIGGKMI), 107 to 127 (LLLAVATSIDALAVGISFALI), 131 to 151 (VLLPAVIIGVVAFLFSFFGVL), and 165 to 185 (QILGGVILVLIGIKFLIEYCL).

It belongs to the MntP (TC 9.B.29) family.

The protein resides in the cell membrane. Functionally, probably functions as a manganese efflux pump. The chain is Putative manganese efflux pump MntP from Methanocorpusculum labreanum (strain ATCC 43576 / DSM 4855 / Z).